Here is a 180-residue protein sequence, read N- to C-terminus: Required for excision 1-B domain-containing protein (180 aa).

Residues 1–23 (MITAEAASESTVPAVPGDTAATG) form a disordered region.

In Bos taurus (Bovine), this protein is Required for excision 1-B domain-containing protein.